The sequence spans 241 residues: Pyridoxal phosphate phosphatase PHOSPHO2 (241 aa).

D8 serves as the catalytic Nucleophile. Mg(2+)-binding residues include D8 and D10. The active-site Proton donor is the D10. 2 residues coordinate substrate: D19 and D99. Residue D179 coordinates Mg(2+).

This sequence belongs to the HAD-like hydrolase superfamily. PHOSPHO family. Mg(2+) is required as a cofactor.

It catalyses the reaction pyridoxal 5'-phosphate + H2O = pyridoxal + phosphate. Functionally, phosphatase that has high activity toward pyridoxal 5'-phosphate (PLP). Also active at much lower level toward pyrophosphate, phosphoethanolamine (PEA), phosphocholine (PCho), phospho-l-tyrosine, fructose-6-phosphate, p-nitrophenyl phosphate, and h-glycerophosphate. The sequence is that of Pyridoxal phosphate phosphatase PHOSPHO2 (PHOSPHO2) from Homo sapiens (Human).